The chain runs to 380 residues: MSSKRSIFEEVSDGARAAAAQPGMIDRGRGGARGAIRAWLAVLFALVVAMIVVGGLTRLTDSGLSITEWRPVTGAIPPLSEADWQAEFDKYKQIDQWRLQNQWMELADFKSIYWWEWGHRQLGRVIGLVWALGFFGFLLARKIPAGWTGRLILPGVLGGVQGAVGAWMVASGITQGEGMTSVASYRLATHLGLAFVILGLLAWSILQLGRSERDLMQARRTKEARLFGLATGWLHLAFLQILIGALVAGLDAGRNYVDWPLMAGQVIPPDPLELSPLWRNFFENPGLVQFIHRIVGYLLLAYGVMVWLRGRRSAHAQTRFAFNAGFAALSLQVVLGIVTVLYAAPWQIAILHQLLAVGVFVLILRARFLCAYPIATSIRG.

The next 8 helical transmembrane spans lie at 36–56 (IRAWLAVLFALVVAMIVVGGL), 125–145 (VIGLVWALGFFGFLLARKIPA), 151–171 (LILPGVLGGVQGAVGAWMVAS), 187–207 (LATHLGLAFVILGLLAWSILQ), 227–247 (FGLATGWLHLAFLQILIGALV), 287–307 (LVQFIHRIVGYLLLAYGVMVW), 320–340 (FAFNAGFAALSLQVVLGIVTV), and 344–364 (APWQIAILHQLLAVGVFVLIL). A heme-binding site is contributed by histidine 292. Histidine 352 is a binding site for heme.

It belongs to the COX15/CtaA family. Type 2 subfamily. Interacts with CtaB. Heme b is required as a cofactor.

The protein resides in the cell membrane. It carries out the reaction Fe(II)-heme o + 2 A + H2O = Fe(II)-heme a + 2 AH2. Its pathway is porphyrin-containing compound metabolism; heme A biosynthesis; heme A from heme O: step 1/1. Catalyzes the conversion of heme O to heme A by two successive hydroxylations of the methyl group at C8. The first hydroxylation forms heme I, the second hydroxylation results in an unstable dihydroxymethyl group, which spontaneously dehydrates, resulting in the formyl group of heme A. The sequence is that of Heme A synthase from Ruegeria pomeroyi (strain ATCC 700808 / DSM 15171 / DSS-3) (Silicibacter pomeroyi).